The primary structure comprises 564 residues: Mitochondrial distribution and morphology protein 34-1 (564 aa).

Residues Met1–Leu195 enclose the SMP-LTD domain. 2 stretches are compositionally biased toward polar residues: residues Pro297–Gly322 and Asp329–Gly352. Disordered stretches follow at residues Pro297 to Ala408, His414 to Leu433, and Asp452 to Thr473. A compositionally biased stretch (basic residues) spans Arg359–Arg371. The segment covering Ser383–Ser394 has biased composition (low complexity). The segment covering Tyr396 to Ala408 has biased composition (polar residues). The span at Asp452–Glu466 shows a compositional bias: basic and acidic residues.

Belongs to the MDM34 family. As to quaternary structure, component of the ER-mitochondria encounter structure (ERMES) or MDM complex, composed of mmm1, mdm10, mdm12 and mdm34.

It localises to the mitochondrion outer membrane. Functionally, component of the ERMES/MDM complex, which serves as a molecular tether to connect the endoplasmic reticulum (ER) and mitochondria. Components of this complex are involved in the control of mitochondrial shape and protein biogenesis, and function in nonvesicular lipid trafficking between the ER and mitochondria. Mdm34 is required for the interaction of the ER-resident membrane protein mmm1 and the outer mitochondrial membrane-resident beta-barrel protein mdm10. The polypeptide is Mitochondrial distribution and morphology protein 34-1 (Penicillium rubens (strain ATCC 28089 / DSM 1075 / NRRL 1951 / Wisconsin 54-1255) (Penicillium chrysogenum)).